Reading from the N-terminus, the 365-residue chain is Selina-4(15),7(11)-diene synthase ((2E,6E)-farnesyl diphosphate cyclizing) (365 aa).

D82 and E87 together coordinate Mg(2+). Positions 82-87 (DDGHCE) match the DDXXXE motif motif. R178 is a substrate binding site. Positions 224 and 228 each coordinate Mg(2+). K231 is a substrate binding site. Residue E232 participates in Mg(2+) binding. Residue 310–311 (RY) coordinates substrate.

This sequence belongs to the terpene synthase family. Monomer. Mg(2+) is required as a cofactor.

The enzyme catalyses (2E,6E)-farnesyl diphosphate = selina-4(15),7(11)-diene + diphosphate. Its pathway is secondary metabolite biosynthesis; terpenoid biosynthesis. Functionally, catalyzes the conversion of (2E,6E)-farnesyl diphosphate (FPP) to yield the bicyclic sesquiterpene selina-4(15),7(11)-diene via a 1,10-cyclization, which requires the abstraction of the pyrophosphate from FPP leading to a (E,E)-germacradienyl cation. The only accepted substrate is (2E,6E)-farnesyl diphosphate (FPP). The protein is Selina-4(15),7(11)-diene synthase ((2E,6E)-farnesyl diphosphate cyclizing) of Streptomyces pristinaespiralis (strain ATCC 25486 / DSM 40338 / CBS 914.69 / JCM 4507 / KCC S-0507 / NBRC 13074 / NRRL 2958 / 5647).